A 465-amino-acid chain; its full sequence is Casein kinase 1-like protein 2 (465 aa).

Residues 9–277 form the Protein kinase domain; the sequence is FRLGRKIGGG…LKRLFRDLFI (269 aa). Residues 15–23 and Lys38 contribute to the ATP site; that span reads IGGGSFGEI. Asp128 (proton acceptor) is an active-site residue. Disordered regions lie at residues 300–344 and 396–428; these read STPP…GIPR and REAA…VSRN. A compositionally biased stretch (polar residues) spans 405-428; that stretch reads SEPSNPQIVEAGSGSNSKIPVSRN.

Belongs to the protein kinase superfamily. CK1 Ser/Thr protein kinase family. Casein kinase I subfamily. In terms of assembly, monomer. In terms of processing, autophosphorylated.

Its subcellular location is the cytoplasm. It localises to the nucleus. The catalysed reaction is L-seryl-[protein] + ATP = O-phospho-L-seryl-[protein] + ADP + H(+). It carries out the reaction L-threonyl-[protein] + ATP = O-phospho-L-threonyl-[protein] + ADP + H(+). Functionally, casein kinases are operationally defined by their preferential utilization of acidic proteins such as caseins as substrates. It can phosphorylate a large number of proteins. This Arabidopsis thaliana (Mouse-ear cress) protein is Casein kinase 1-like protein 2.